Reading from the N-terminus, the 179-residue chain is Large ribosomal subunit protein uL5 (179 aa).

It belongs to the universal ribosomal protein uL5 family. As to quaternary structure, part of the 50S ribosomal subunit; part of the 5S rRNA/L5/L18/L25 subcomplex. Contacts the 5S rRNA and the P site tRNA. Forms a bridge to the 30S subunit in the 70S ribosome.

Functionally, this is one of the proteins that bind and probably mediate the attachment of the 5S RNA into the large ribosomal subunit, where it forms part of the central protuberance. In the 70S ribosome it contacts protein S13 of the 30S subunit (bridge B1b), connecting the 2 subunits; this bridge is implicated in subunit movement. Contacts the P site tRNA; the 5S rRNA and some of its associated proteins might help stabilize positioning of ribosome-bound tRNAs. The chain is Large ribosomal subunit protein uL5 from Hamiltonella defensa subsp. Acyrthosiphon pisum (strain 5AT).